The sequence spans 289 residues: Ribosomal RNA small subunit methyltransferase A (289 aa).

Asn-28, Leu-30, Gly-55, Glu-77, Asp-103, and Asn-122 together coordinate S-adenosyl-L-methionine.

It belongs to the class I-like SAM-binding methyltransferase superfamily. rRNA adenine N(6)-methyltransferase family. RsmA subfamily.

The protein resides in the cytoplasm. The enzyme catalyses adenosine(1518)/adenosine(1519) in 16S rRNA + 4 S-adenosyl-L-methionine = N(6)-dimethyladenosine(1518)/N(6)-dimethyladenosine(1519) in 16S rRNA + 4 S-adenosyl-L-homocysteine + 4 H(+). Its function is as follows. Specifically dimethylates two adjacent adenosines (A1518 and A1519) in the loop of a conserved hairpin near the 3'-end of 16S rRNA in the 30S particle. May play a critical role in biogenesis of 30S subunits. The polypeptide is Ribosomal RNA small subunit methyltransferase A (Jannaschia sp. (strain CCS1)).